The chain runs to 377 residues: Homoserine O-succinyltransferase (377 aa).

The AB hydrolase-1 domain occupies 50-358 (NAILVCHALS…PSTYGHDSFL (309 aa)). Serine 156 serves as the catalytic Nucleophile. A substrate-binding site is contributed by arginine 226. Residues aspartate 321 and histidine 354 contribute to the active site. Aspartate 355 contributes to the substrate binding site.

This sequence belongs to the AB hydrolase superfamily. MetX family. As to quaternary structure, homodimer.

It localises to the cytoplasm. It carries out the reaction L-homoserine + succinyl-CoA = O-succinyl-L-homoserine + CoA. Its pathway is amino-acid biosynthesis; L-methionine biosynthesis via de novo pathway; O-succinyl-L-homoserine from L-homoserine: step 1/1. Its function is as follows. Transfers a succinyl group from succinyl-CoA to L-homoserine, forming succinyl-L-homoserine. The sequence is that of Homoserine O-succinyltransferase from Nitrosomonas eutropha (strain DSM 101675 / C91 / Nm57).